The primary structure comprises 522 residues: Sensory neuron membrane protein 1 (522 aa).

Over 1 to 11 (MQLAKPLKYAA) the chain is Cytoplasmic. Residues 12-32 (ISGIVAFVGLMFGWVIFPAIL) form a helical membrane-spanning segment. Topologically, residues 33 to 458 (KSQLKKEMAL…SQLFIPKRVV (426 aa)) are extracellular. N-linked (GlcNAc...) asparagine glycans are attached at residues N67, N105, and N229. Disulfide bonds link C268–C333, C297–C352, and C335–C341. Residue N440 is glycosylated (N-linked (GlcNAc...) asparagine). The helical transmembrane segment at 459–479 (SVVCWCMISFGSLGVIAAVIF) threads the bilayer. At 480-522 (HFKGDIMHLAVAGDNSVSKIKPENDENKEVGVMGQNQEPAKVM) the chain is on the cytoplasmic side. The tract at residues 500–522 (KPENDENKEVGVMGQNQEPAKVM) is disordered. Over residues 513 to 522 (GQNQEPAKVM) the composition is skewed to polar residues.

This sequence belongs to the CD36 family. In terms of tissue distribution, principal component of the olfactory cilia membrane. Detected in both male and female antennae but not present in leg, abdomen, thorax or head.

It is found in the cell membrane. Its function is as follows. Plays an olfactory role that is not restricted to pheromone sensitivity. The protein is Sensory neuron membrane protein 1 of Bombyx mori (Silk moth).